Consider the following 200-residue polypeptide: MKKIVLATGNQGKVREMADLLSDFGFDVVAQSEFNVPEAAETGTTFIENAIIKARHAAQITGLPTIADDSGLEVDYLNGAPGIYSARYAGEHASDGDNLNKLLMAMQDVPDDQRSARFHCVLVLMRHADDPTPIVCHGKWEGKILTAPHGSNGFGYDPIFWVPEENCASAELEPVRKKQLSHRGKALQKLFKAIEEQRTC.

A substrate-binding site is contributed by 8–13; sequence TGNQGK. Residue aspartate 69 is the Proton acceptor of the active site. Residue aspartate 69 coordinates Mg(2+). Substrate is bound by residues serine 70, 154–157, lysine 177, and 182–183; these read FGYD and HR.

Belongs to the HAM1 NTPase family. As to quaternary structure, homodimer. Mg(2+) serves as cofactor.

The catalysed reaction is XTP + H2O = XMP + diphosphate + H(+). It catalyses the reaction dITP + H2O = dIMP + diphosphate + H(+). The enzyme catalyses ITP + H2O = IMP + diphosphate + H(+). In terms of biological role, pyrophosphatase that catalyzes the hydrolysis of nucleoside triphosphates to their monophosphate derivatives, with a high preference for the non-canonical purine nucleotides XTP (xanthosine triphosphate), dITP (deoxyinosine triphosphate) and ITP. Seems to function as a house-cleaning enzyme that removes non-canonical purine nucleotides from the nucleotide pool, thus preventing their incorporation into DNA/RNA and avoiding chromosomal lesions. This is dITP/XTP pyrophosphatase from Vibrio cholerae serotype O1 (strain ATCC 39315 / El Tor Inaba N16961).